We begin with the raw amino-acid sequence, 219 residues long: Probable nicotinate-nucleotide adenylyltransferase (219 aa).

The protein belongs to the NadD family.

The enzyme catalyses nicotinate beta-D-ribonucleotide + ATP + H(+) = deamido-NAD(+) + diphosphate. It functions in the pathway cofactor biosynthesis; NAD(+) biosynthesis; deamido-NAD(+) from nicotinate D-ribonucleotide: step 1/1. Functionally, catalyzes the reversible adenylation of nicotinate mononucleotide (NaMN) to nicotinic acid adenine dinucleotide (NaAD). The polypeptide is Probable nicotinate-nucleotide adenylyltransferase (Chromohalobacter salexigens (strain ATCC BAA-138 / DSM 3043 / CIP 106854 / NCIMB 13768 / 1H11)).